We begin with the raw amino-acid sequence, 598 residues long: Elongation factor 4 (598 aa).

A tr-type G domain is found at Ser-5–Thr-187. GTP contacts are provided by residues Asp-17–Thr-22 and Asn-134–Asp-137.

It belongs to the TRAFAC class translation factor GTPase superfamily. Classic translation factor GTPase family. LepA subfamily.

It localises to the cell inner membrane. The catalysed reaction is GTP + H2O = GDP + phosphate + H(+). Required for accurate and efficient protein synthesis under certain stress conditions. May act as a fidelity factor of the translation reaction, by catalyzing a one-codon backward translocation of tRNAs on improperly translocated ribosomes. Back-translocation proceeds from a post-translocation (POST) complex to a pre-translocation (PRE) complex, thus giving elongation factor G a second chance to translocate the tRNAs correctly. Binds to ribosomes in a GTP-dependent manner. The polypeptide is Elongation factor 4 (Pseudomonas syringae pv. syringae (strain B728a)).